Here is a 628-residue protein sequence, read N- to C-terminus: uncharacterized protein (628 aa).

Disordered stretches follow at residues 1-65 (MDTN…ISSA) and 80-125 (SLRN…VSLS). Over residues 12 to 21 (ISPSIASSFP) the composition is skewed to low complexity. Polar residues predominate over residues 25–37 (PFSSQNSTTSNPE). Low complexity-rich tracts occupy residues 48–64 (SSII…NISS) and 87–102 (SPHI…SSSS). Basic and acidic residues predominate over residues 103-116 (DLDKSMLDEKHPDS). 12 consecutive transmembrane segments (helical) span residues 157 to 177 (IITC…SISL), 203 to 223 (VGTG…NLLM), 230 to 250 (LWLS…AVLG), 259 to 279 (FIAL…GFAF), 294 to 314 (IGWY…LSAA), 324 to 344 (LYGY…QGLF), 417 to 437 (LWPP…LVNY), 454 to 474 (VSLL…TVLP), 483 to 503 (MLFF…TTFV), 511 to 531 (VGLL…MTWV), 542 to 562 (VGVA…SVVA), and 583 to 603 (MCGM…VQKF).

The protein belongs to the major facilitator superfamily. Allantoate permease family.

The protein localises to the membrane. This is an uncharacterized protein from Schizosaccharomyces pombe (strain 972 / ATCC 24843) (Fission yeast).